Here is a 412-residue protein sequence, read N- to C-terminus: Transcription factor IIIA (412 aa).

Residues 20–43 (YLCQYCGISRSKNYLITKHIQSHH) form a C2H2-type 1; degenerate zinc finger. 3 C2H2-type zinc fingers span residues 66 to 88 (HTCQECGAEFKKPAHLKQHMQSH), 94 to 118 (FTCYVDDCAASYRRKDHLNRHLLTH), and 123 to 148 (FKCPKENCKSEFSVQGNVGRHVKKYH). The interval 144–207 (VKKYHSNDNR…NGNGDSQPAE (64 aa)) is disordered. The span at 148–188 (HSNDNRDKDNTGLGDGDKDNTCKGDDDKEKSGSGGCEKENE) shows a compositional bias: basic and acidic residues. A Glycyl lysine isopeptide (Lys-Gly) (interchain with G-Cter in ubiquitin) cross-link involves residue lysine 185. The segment at 215–239 (VVCKEIGCGKAFKYPSQLQKHQDSH) adopts a C2H2-type 5 zinc-finger fold. The segment at 247-272 (AFCSEPGCMKYFTNEECLKSHIRSCH) adopts a C2H2-type 6; degenerate zinc-finger fold. A C2H2-type 7; degenerate zinc finger spans residues 275–296 (INCEICGSKHLKKNIKRHLRTH). The C2H2-type 8 zinc finger occupies 305-330 (IKCEVEGCSSTFSKASNLQKHMKAVH). The C2H2-type 9; degenerate zinc finger occupies 336-362 (FVCGFPGCGMRFAYKHVRNKHENSGYH). The Nuclear localization signal motif lies at 384–391 (LKRKQVTA).

Post-translationally, protein product TFIIIA (44 kDa) is proteolytically cleaved into TFIIIA-C (34 kDa). As to expression, expressed in seedlings, flowers, siliques and seeds.

Its subcellular location is the nucleus. The protein resides in the nucleolus. Functionally, essential protein. Isoform 1 is a transcription activator the binds both 5S rDNA and 5S rRNA and stimulates the transcription of 5S rRNA gene. Isoform 1 regulates 5S rRNA levels during development. The chain is Transcription factor IIIA from Arabidopsis thaliana (Mouse-ear cress).